The following is a 137-amino-acid chain: NADH dehydrogenase [ubiquinone] 1 beta subcomplex subunit 7 (137 aa).

The N-myristoyl glycine moiety is linked to residue G2. Residues 56–98 form the CHCH domain; that stretch reads RDYCAHYLIRFLKCKRDSFPNFLACKHERHDWDYCEHLDYVKR. Positions 59–69 match the Cx9C motif 1 motif; that stretch reads CAHYLIRFLKC. 2 disulfide bridges follow: C59–C90 and C69–C80. At S73 the chain carries Phosphoserine. Positions 80–90 match the Cx9C motif 2 motif; the sequence is CKHERHDWDYC. Residues 110–137 form a disordered region; sequence QRKKRREQREADMAKGLGPGEVAPEVAL.

It belongs to the complex I NDUFB7 subunit family. As to quaternary structure, complex I is composed of 45 different subunits.

It localises to the mitochondrion inner membrane. Its subcellular location is the mitochondrion intermembrane space. Functionally, accessory subunit of the mitochondrial membrane respiratory chain NADH dehydrogenase (Complex I), that is believed not to be involved in catalysis. Complex I functions in the transfer of electrons from NADH to the respiratory chain. The immediate electron acceptor for the enzyme is believed to be ubiquinone. This Bos taurus (Bovine) protein is NADH dehydrogenase [ubiquinone] 1 beta subcomplex subunit 7 (NDUFB7).